The primary structure comprises 161 residues: uncharacterized protein (161 aa).

Transmembrane regions (helical) follow at residues 22-42, 43-63, 89-109, and 110-130; these read LFFINVGLAAVAMLVAGVFGH, LTVGMFLGLGLLLGLLNALLV, LAIITILGLIIAYIFRPAGLG, and VVFGLAFFQVLLVATTALPVL. The disordered stretch occupies residues 141–161; the sequence is VATYSSNGQTGGSEGRSASDD.

This sequence to M.leprae ML1138.

The protein resides in the cell membrane. This is an uncharacterized protein from Mycobacterium bovis (strain ATCC BAA-935 / AF2122/97).